The sequence spans 368 residues: Phosphate acyltransferase (368 aa).

Belongs to the PlsX family. In terms of assembly, homodimer. Probably interacts with PlsY.

The protein localises to the cytoplasm. The enzyme catalyses a fatty acyl-[ACP] + phosphate = an acyl phosphate + holo-[ACP]. It participates in lipid metabolism; phospholipid metabolism. In terms of biological role, catalyzes the reversible formation of acyl-phosphate (acyl-PO(4)) from acyl-[acyl-carrier-protein] (acyl-ACP). This enzyme utilizes acyl-ACP as fatty acyl donor, but not acyl-CoA. In Methylibium petroleiphilum (strain ATCC BAA-1232 / LMG 22953 / PM1), this protein is Phosphate acyltransferase.